We begin with the raw amino-acid sequence, 359 residues long: Phospho-N-acetylmuramoyl-pentapeptide-transferase (359 aa).

10 helical membrane-spanning segments follow: residues 7–27, 28–48, 82–102, 103–123, 147–167, 179–199, 203–223, 229–249, 256–276, and 337–357; these read RSLT…VNSY, IFNS…SLVI, MGGI…NNYV, DSVG…IGFL, ALIA…NPLI, IVIF…VNLT, DGLA…EIFI, LIIY…FLKY, IFMG…ISIL, and IVEN…VLKI.

It belongs to the glycosyltransferase 4 family. MraY subfamily. Mg(2+) serves as cofactor.

The protein resides in the cell inner membrane. The enzyme catalyses UDP-N-acetyl-alpha-D-muramoyl-L-alanyl-gamma-D-glutamyl-meso-2,6-diaminopimeloyl-D-alanyl-D-alanine + di-trans,octa-cis-undecaprenyl phosphate = di-trans,octa-cis-undecaprenyl diphospho-N-acetyl-alpha-D-muramoyl-L-alanyl-D-glutamyl-meso-2,6-diaminopimeloyl-D-alanyl-D-alanine + UMP. It functions in the pathway cell wall biogenesis; peptidoglycan biosynthesis. Functionally, catalyzes the initial step of the lipid cycle reactions in the biosynthesis of the cell wall peptidoglycan: transfers peptidoglycan precursor phospho-MurNAc-pentapeptide from UDP-MurNAc-pentapeptide onto the lipid carrier undecaprenyl phosphate, yielding undecaprenyl-pyrophosphoryl-MurNAc-pentapeptide, known as lipid I. The sequence is that of Phospho-N-acetylmuramoyl-pentapeptide-transferase from Prochlorococcus marinus subsp. pastoris (strain CCMP1986 / NIES-2087 / MED4).